We begin with the raw amino-acid sequence, 403 residues long: Tyrosine--tRNA ligase (403 aa).

A 'HIGH' region motif is present at residues 42–51 (PTAPDLHLGH). A 'KMSKS' region motif is present at residues 226 to 230 (KMSKS). Lysine 229 serves as a coordination point for ATP. The region spanning 339–400 (LRIASLLTAA…GKRNFARVSL (62 aa)) is the S4 RNA-binding domain.

The protein belongs to the class-I aminoacyl-tRNA synthetase family. TyrS type 2 subfamily. Homodimer.

It localises to the cytoplasm. It catalyses the reaction tRNA(Tyr) + L-tyrosine + ATP = L-tyrosyl-tRNA(Tyr) + AMP + diphosphate + H(+). Its function is as follows. Catalyzes the attachment of tyrosine to tRNA(Tyr) in a two-step reaction: tyrosine is first activated by ATP to form Tyr-AMP and then transferred to the acceptor end of tRNA(Tyr). This chain is Tyrosine--tRNA ligase, found in Xanthomonas oryzae pv. oryzae (strain MAFF 311018).